Consider the following 137-residue polypeptide: Large ribosomal subunit protein uL24 (137 aa).

Belongs to the universal ribosomal protein uL24 family. As to quaternary structure, part of the 50S ribosomal subunit.

In terms of biological role, one of two assembly initiator proteins, it binds directly to the 5'-end of the 23S rRNA, where it nucleates assembly of the 50S subunit. Functionally, located at the polypeptide exit tunnel on the outside of the subunit. The protein is Large ribosomal subunit protein uL24 of Sulfurisphaera tokodaii (strain DSM 16993 / JCM 10545 / NBRC 100140 / 7) (Sulfolobus tokodaii).